A 358-amino-acid polypeptide reads, in one-letter code: Gibberellin receptor GID1B (358 aa).

A2 carries the post-translational modification N-acetylalanine. An Involved in the stabilization of the negatively charged intermediate by the formation of the oxyanion hole motif is present at residues 113 to 115 (HGG). Residues 115-116 (GS), Y127, and S191 each bind gibberellin A4. 4 residues coordinate gibberellin A3: S116, Y127, S191, and F238. S191 is a catalytic residue. D289 is a catalytic residue. Residue G320 coordinates gibberellin A4. G320 contacts gibberellin A3.

This sequence belongs to the 'GDXG' lipolytic enzyme family. Interacts with the DELLA proteins GAI, RGA, RGL1, RGL2 and RGL3 in a GA-dependent manner. As to expression, widely expressed.

The protein resides in the nucleus. Functionally, functions as a soluble gibberellin (GA) receptor. GA is an essential hormone that regulates growth and development in plants. Binds with high affinity the biologically active gibberellin GA4, but has no affinity for the biologically inactive GAs. In response to GA, interacts with specific DELLA proteins, known as repressors of GA-induced growth, and targets them for degradation via proteasome. Seems to be required for GA signaling that controls root growth, seed germination and flower development. May function as a dominant GA receptor at low GA concentrations in germination. Partially redundant with GID1A and GID1C. In Arabidopsis thaliana (Mouse-ear cress), this protein is Gibberellin receptor GID1B (GID1B).